Here is a 104-residue protein sequence, read N- to C-terminus: Large ribosomal subunit protein uL24 (104 aa).

Belongs to the universal ribosomal protein uL24 family. Part of the 50S ribosomal subunit.

One of two assembly initiator proteins, it binds directly to the 5'-end of the 23S rRNA, where it nucleates assembly of the 50S subunit. In terms of biological role, one of the proteins that surrounds the polypeptide exit tunnel on the outside of the subunit. This Clostridium botulinum (strain Eklund 17B / Type B) protein is Large ribosomal subunit protein uL24.